The primary structure comprises 404 residues: Argininosuccinate synthase (404 aa).

ATP is bound by residues 10 to 18 (AYSGGVDTS) and alanine 38. Tyrosine 89 is a binding site for L-citrulline. Glycine 119 lines the ATP pocket. 3 residues coordinate L-aspartate: threonine 121, asparagine 125, and aspartate 126. Asparagine 125 contributes to the L-citrulline binding site. Arginine 129, serine 177, serine 186, glutamate 262, and tyrosine 274 together coordinate L-citrulline.

The protein belongs to the argininosuccinate synthase family. Type 1 subfamily. Homotetramer.

It is found in the cytoplasm. It carries out the reaction L-citrulline + L-aspartate + ATP = 2-(N(omega)-L-arginino)succinate + AMP + diphosphate + H(+). The protein operates within amino-acid biosynthesis; L-arginine biosynthesis; L-arginine from L-ornithine and carbamoyl phosphate: step 2/3. The polypeptide is Argininosuccinate synthase (Prochlorococcus marinus (strain AS9601)).